The chain runs to 195 residues: Thymidine kinase (195 aa).

ATP-binding positions include 15-22 (GSMFSGKS) and 88-91 (DEVQ). The active-site Proton acceptor is the Glu89. Positions 145, 148, 183, and 186 each coordinate Zn(2+).

It belongs to the thymidine kinase family. In terms of assembly, homotetramer.

Its subcellular location is the cytoplasm. It carries out the reaction thymidine + ATP = dTMP + ADP + H(+). The polypeptide is Thymidine kinase (Bacillus cereus (strain ATCC 10987 / NRS 248)).